A 429-amino-acid chain; its full sequence is Histidine--tRNA ligase (429 aa).

The protein belongs to the class-II aminoacyl-tRNA synthetase family. Homodimer.

Its subcellular location is the cytoplasm. It carries out the reaction tRNA(His) + L-histidine + ATP = L-histidyl-tRNA(His) + AMP + diphosphate + H(+). The polypeptide is Histidine--tRNA ligase (Streptococcus pneumoniae serotype 4 (strain ATCC BAA-334 / TIGR4)).